We begin with the raw amino-acid sequence, 498 residues long: Hexokinase-1 (498 aa).

A helical transmembrane segment spans residues 4–24 (VTVGAAVVGAAAVCAVAALIV). Positions 35–488 (GRAMAILREF…SGIGAALLRA (454 aa)) constitute a Hexokinase domain. A hexokinase small subdomain region spans residues 89 to 228 (QLVMKLGVFY…VLDMRVSALV (140 aa)). ADP-binding residues include glycine 104, threonine 105, and asparagine 106. D-glucose is bound by residues threonine 194, lysine 195, asparagine 229, and aspartate 230. Positions 229–477 (NDTVGTLAGG…TSIVFVHSND (249 aa)) are hexokinase large subdomain. Threonine 253 is an ADP binding site. Positions 256, 284, and 315 each coordinate D-glucose. Glycine 442 is an ADP binding site.

Belongs to the hexokinase family. In terms of tissue distribution, expressed in young and mature leaves, stems, roots, stolons, and developing and mature tubers.

The protein localises to the plastid. Its subcellular location is the chloroplast outer membrane. It catalyses the reaction a D-hexose + ATP = a D-hexose 6-phosphate + ADP + H(+). The enzyme catalyses D-fructose + ATP = D-fructose 6-phosphate + ADP + H(+). It carries out the reaction D-glucose + ATP = D-glucose 6-phosphate + ADP + H(+). The protein operates within carbohydrate metabolism; hexose metabolism. It functions in the pathway carbohydrate degradation; glycolysis; D-glyceraldehyde 3-phosphate and glycerone phosphate from D-glucose: step 1/4. Functionally, fructose and glucose phosphorylating enzyme. May be involved in the phosphorylation of glucose during the export from plastids to cytosol. Seems neither to be involved in cell sugar sensing nor in carbohydrate metabolism in tuber. This is Hexokinase-1 (HXK1) from Solanum tuberosum (Potato).